We begin with the raw amino-acid sequence, 221 residues long: Thiamine-phosphate synthase (221 aa).

4-amino-2-methyl-5-(diphosphooxymethyl)pyrimidine is bound by residues 41–45 (QLRDK) and N82. Positions 83 and 102 each coordinate Mg(2+). Residue S120 participates in 4-amino-2-methyl-5-(diphosphooxymethyl)pyrimidine binding. 146-148 (TPT) is a 2-[(2R,5Z)-2-carboxy-4-methylthiazol-5(2H)-ylidene]ethyl phosphate binding site. K149 is a binding site for 4-amino-2-methyl-5-(diphosphooxymethyl)pyrimidine. A 2-[(2R,5Z)-2-carboxy-4-methylthiazol-5(2H)-ylidene]ethyl phosphate-binding site is contributed by G177.

The protein belongs to the thiamine-phosphate synthase family. It depends on Mg(2+) as a cofactor.

The enzyme catalyses 2-[(2R,5Z)-2-carboxy-4-methylthiazol-5(2H)-ylidene]ethyl phosphate + 4-amino-2-methyl-5-(diphosphooxymethyl)pyrimidine + 2 H(+) = thiamine phosphate + CO2 + diphosphate. It carries out the reaction 2-(2-carboxy-4-methylthiazol-5-yl)ethyl phosphate + 4-amino-2-methyl-5-(diphosphooxymethyl)pyrimidine + 2 H(+) = thiamine phosphate + CO2 + diphosphate. It catalyses the reaction 4-methyl-5-(2-phosphooxyethyl)-thiazole + 4-amino-2-methyl-5-(diphosphooxymethyl)pyrimidine + H(+) = thiamine phosphate + diphosphate. The protein operates within cofactor biosynthesis; thiamine diphosphate biosynthesis; thiamine phosphate from 4-amino-2-methyl-5-diphosphomethylpyrimidine and 4-methyl-5-(2-phosphoethyl)-thiazole: step 1/1. Its function is as follows. Condenses 4-methyl-5-(beta-hydroxyethyl)thiazole monophosphate (THZ-P) and 2-methyl-4-amino-5-hydroxymethyl pyrimidine pyrophosphate (HMP-PP) to form thiamine monophosphate (TMP). This chain is Thiamine-phosphate synthase, found in Mycolicibacterium vanbaalenii (strain DSM 7251 / JCM 13017 / BCRC 16820 / KCTC 9966 / NRRL B-24157 / PYR-1) (Mycobacterium vanbaalenii).